A 334-amino-acid chain; its full sequence is Cathepsin K (334 aa).

An N-terminal signal peptide occupies residues 1-19 (MLRLHWLALLVLLLPMAAA). The propeptide at 20–119 (QLRPEPELDA…TLYVPDWSSR (100 aa)) is activation peptide. N108 is a glycosylation site (N-linked (GlcNAc...) asparagine). 3 disulfides stabilise this stretch: C141/C182, C175/C215, and C274/C323. C144 is an active-site residue. Active-site residues include H281 and N301.

The protein belongs to the peptidase C1 family.

The enzyme catalyses Broad proteolytic activity. With small-molecule substrates and inhibitors, the major determinant of specificity is P2, which is preferably Leu, Met &gt; Phe, and not Arg.. Closely involved in osteoclastic bone resorption and may participate partially in the disorder of bone remodeling. Displays potent endoprotease activity against fibrinogen at acid pH. May play an important role in extracellular matrix degradation. The chain is Cathepsin K (CTSK) from Gallus gallus (Chicken).